The chain runs to 337 residues: Putative 2-aminoethylphosphonate-binding periplasmic protein (337 aa).

The first 21 residues, 1-21 (MKLSRLALLSVFALASAPSWA), serve as a signal peptide directing secretion.

Belongs to the bacterial solute-binding protein 1 family.

The protein localises to the periplasm. Probably part of the PhnSTUV complex (TC 3.A.1.11.5) involved in 2-aminoethylphosphonate import. The chain is Putative 2-aminoethylphosphonate-binding periplasmic protein (phnS) from Salmonella typhimurium (strain LT2 / SGSC1412 / ATCC 700720).